The primary structure comprises 640 residues: Threonine--tRNA ligase (640 aa).

Residues 1 to 61 form the TGS domain; sequence MPIITLPNGD…TEDATLQIIT (61 aa). The catalytic stretch occupies residues 242-533; that stretch reads DHRKIGKALD…LIEHYAGFMP (292 aa). The Zn(2+) site is built by cysteine 333, histidine 384, and histidine 510.

The protein belongs to the class-II aminoacyl-tRNA synthetase family. In terms of assembly, homodimer. It depends on Zn(2+) as a cofactor.

It is found in the cytoplasm. The enzyme catalyses tRNA(Thr) + L-threonine + ATP = L-threonyl-tRNA(Thr) + AMP + diphosphate + H(+). Catalyzes the attachment of threonine to tRNA(Thr) in a two-step reaction: L-threonine is first activated by ATP to form Thr-AMP and then transferred to the acceptor end of tRNA(Thr). Also edits incorrectly charged L-seryl-tRNA(Thr). The chain is Threonine--tRNA ligase from Acinetobacter baylyi (strain ATCC 33305 / BD413 / ADP1).